A 604-amino-acid chain; its full sequence is Elongation factor 4 (604 aa).

One can recognise a tr-type G domain in the interval 10–191; that stretch reads KNIRNFSIIA…KIITTIPAPS (182 aa). GTP-binding positions include 22 to 27 and 138 to 141; these read DHGKST and NKID.

This sequence belongs to the TRAFAC class translation factor GTPase superfamily. Classic translation factor GTPase family. LepA subfamily.

It is found in the cell inner membrane. It catalyses the reaction GTP + H2O = GDP + phosphate + H(+). Required for accurate and efficient protein synthesis under certain stress conditions. May act as a fidelity factor of the translation reaction, by catalyzing a one-codon backward translocation of tRNAs on improperly translocated ribosomes. Back-translocation proceeds from a post-translocation (POST) complex to a pre-translocation (PRE) complex, thus giving elongation factor G a second chance to translocate the tRNAs correctly. Binds to ribosomes in a GTP-dependent manner. The chain is Elongation factor 4 from Helicobacter pylori (strain J99 / ATCC 700824) (Campylobacter pylori J99).